A 271-amino-acid polypeptide reads, in one-letter code: MQHKLIAFIGGGNMAQAIILGLLKQGYPAEQIIVNDPNEEKRAFFANLDVATSENNVGSAIKAEVVLLAVKPQMMAEVCSPLSAVDFSDKLLISIAAGISTERLNALIPSVKSIVRVMPNTPALVGEGMAGLFAPKNTSENYRTFAQDLLGAVGRTVWVNDETQMHAVTAASGSSPAYFFLMLEAMQKALIKMNIDEKTARELVQQSMLGAAKMVTENPQIALSTLRENVTSKGGTTAAALAVFDAQHFNQTIEQAMQACLSRSQEMETLF.

The protein belongs to the pyrroline-5-carboxylate reductase family.

The protein localises to the cytoplasm. It catalyses the reaction L-proline + NADP(+) = (S)-1-pyrroline-5-carboxylate + NADPH + 2 H(+). It carries out the reaction L-proline + NAD(+) = (S)-1-pyrroline-5-carboxylate + NADH + 2 H(+). The protein operates within amino-acid biosynthesis; L-proline biosynthesis; L-proline from L-glutamate 5-semialdehyde: step 1/1. Its function is as follows. Catalyzes the reduction of 1-pyrroline-5-carboxylate (PCA) to L-proline. The chain is Pyrroline-5-carboxylate reductase from Haemophilus influenzae (strain ATCC 51907 / DSM 11121 / KW20 / Rd).